A 695-amino-acid polypeptide reads, in one-letter code: MNNYFIGKVLSGHHINNNGNGNTLSRTALTPTNNNVNRGDLVTNGLTPIDNNFIGSNGFIPRNVTRKDPFRKRTTQEFIREWTEWKEKSASLFTAPIVGVITSTLLEALKKLVAGRVLMSLTNLLFPNNSTSTMEEILRATEQYIQEQLDTVTWNRVSQELEGLKNDLRTFNDQIDDFLQNRVGISPLAIIDSINTMQQLFVNRLPQFQVSDDQVLLLPLFAQAVTLHLTFVRDIIINADEWNIPEAQLNTYKRYLKQYVAQYSNYALSTYEEAFRARFYPRNTVENMLEFKTFMTLNVLDLVSMWSLLKYVNLYVSTSANLYNIGDNKVNEGEYSISYWPFFNTYIQTKSNYVLSGVSGYAMRWSYTNPFFGEYIQDHLYNITASYIGGVNGPQIGQQLSTTELDQLVQQQARADIPVDFTQIPINCTLRNPLEVPYYATRFNELTSLGTAGVGGFVRSDVFISNDSVCGLGTNYSSGQTFYPDYYITNISATVQVNGTNTDISPLYFGENRAITSTNGVNKVIAIYNRKTNYDDFTNIRGTIVHEAPTDSTGFTISPLHLDTVNINSYLYIQENYGNNGDSLRVINRAIIKYRLSAARSVIYRLVLRVSGTASSIVAIYENYPVGSANQINTGTDNEGVIDNDSKFIDLIFNTPFSVSGTARELQLQVSGATTSSPLDIMNIILIPINDVPLY.

Belongs to the delta endotoxin family.

Its function is as follows. Binds to the brush border membrane vesicles of scarab larvae and damages the gut wall somehow to allow the vegetative cells of P.popilliae to enter the hemolymph. This chain is Parasporal crystal protein Cry18Ca (cry18Ca), found in Paenibacillus popilliae (Bacillus popilliae).